A 238-amino-acid polypeptide reads, in one-letter code: U2 small nuclear ribonucleoprotein A' (238 aa).

4 LRR repeats span residues Lys19–Lys40, Thr42–Lys63, Asn64–Pro84, and His89–Cys110. One can recognise an LRRCT domain in the interval Asn123–Leu161.

This sequence belongs to the U2 small nuclear ribonucleoprotein A family. Associated with the spliceosome.

The protein localises to the nucleus. In terms of biological role, involved in pre-mRNA splicing. The sequence is that of U2 small nuclear ribonucleoprotein A' (LEA1) from Debaryomyces hansenii (strain ATCC 36239 / CBS 767 / BCRC 21394 / JCM 1990 / NBRC 0083 / IGC 2968) (Yeast).